A 466-amino-acid chain; its full sequence is MLLGGPPRSPRSGTSPKGPWSSTGHVQFGKSPQTWPRRTRPRSPEPAAPSGVRGSTWTRRRDSPRRAGPTALSRYVGHLWMGRRPPSPEARGPVPRSSAASRARRSLASPGISPGPLTATIGGAVAGGGPRQGRAEAHKEVFPGQRVGKMAAPMELFCWSGGWGLPSVDLDSLAVLTYARFTGAPLKVHKISNPWQSPSGTLPALRTSHGEVISVPHKIITHLRKEKYNADYDLSARQGADTLAFMSLLEEKLLPVLVHTFWIDTKNYVEVTRKWYAEAMPFPLNFFLPGRMQRQYMERLQLLTGEHRPEDEEELEKELYREARECLTLLSQRLGSQKFFFGDAPASLDAFVFSYLALLLQAKLPSGKLQVHLRGLHNLCAYCTHILSLYFPWDGAEVPPQRQTPAGPETEEEPYRRRNQILSVLAGLAAMVGYALLSGIVSIQRATPARAPGTRTLGMAEEDEEE.

The span at 1–19 (MLLGGPPRSPRSGTSPKGP) shows a compositional bias: low complexity. The disordered stretch occupies residues 1–133 (MLLGGPPRSP…AVAGGGPRQG (133 aa)). The span at 20-36 (WSSTGHVQFGKSPQTWP) shows a compositional bias: polar residues. Over residues 90–110 (ARGPVPRSSAASRARRSLASP) the composition is skewed to low complexity. Glycyl lysine isopeptide (Lys-Gly) (interchain with G-Cter in ubiquitin) cross-links involve residues K187, K190, K227, and K317. Residues 421 to 441 (ILSVLAGLAAMVGYALLSGIV) form a helical membrane-spanning segment.

This sequence belongs to the metaxin family. As to quaternary structure, interacts with MTX2/metaxin-2. Associates with the mitochondrial contact site and cristae organizing system (MICOS) complex, composed of at least MICOS10/MIC10, CHCHD3/MIC19, CHCHD6/MIC25, APOOL/MIC27, IMMT/MIC60, APOO/MIC23/MIC26 and QIL1/MIC13. This complex was also known under the names MINOS or MitOS complex. The MICOS complex associates with mitochondrial outer membrane proteins SAMM50, MTX1 and MTX2 (together described as components of the mitochondrial outer membrane sorting assembly machinery (SAM) complex) and DNAJC11, mitochondrial inner membrane protein TMEM11 and with HSPA9. The MICOS and SAM complexes together with DNAJC11 are part of a large protein complex spanning both membranes termed the mitochondrial intermembrane space bridging (MIB) complex. Interacts with ARMC1. Ubiquitinated by PRKN during mitophagy, leading to its degradation and enhancement of mitophagy. Deubiquitinated by USP30.

It localises to the membrane. The protein resides in the mitochondrion outer membrane. In terms of biological role, involved in transport of proteins into the mitochondrion. Essential for embryonic development. The polypeptide is Metaxin-1 (MTX1) (Homo sapiens (Human)).